Consider the following 473-residue polypeptide: Bifunctional protein HldE (473 aa).

The tract at residues 1-318 (MKLSMPRFDQ…RAIQREEGSE (318 aa)) is ribokinase. 194-197 (NLSE) is a binding site for ATP. Asp-263 is an active-site residue. Residues 343–473 (FTNGCFDILH…TAIVEKIRKN (131 aa)) are cytidylyltransferase.

In the N-terminal section; belongs to the carbohydrate kinase PfkB family. It in the C-terminal section; belongs to the cytidylyltransferase family. In terms of assembly, homodimer.

It carries out the reaction D-glycero-beta-D-manno-heptose 7-phosphate + ATP = D-glycero-beta-D-manno-heptose 1,7-bisphosphate + ADP + H(+). The catalysed reaction is D-glycero-beta-D-manno-heptose 1-phosphate + ATP + H(+) = ADP-D-glycero-beta-D-manno-heptose + diphosphate. It participates in nucleotide-sugar biosynthesis; ADP-L-glycero-beta-D-manno-heptose biosynthesis; ADP-L-glycero-beta-D-manno-heptose from D-glycero-beta-D-manno-heptose 7-phosphate: step 1/4. The protein operates within nucleotide-sugar biosynthesis; ADP-L-glycero-beta-D-manno-heptose biosynthesis; ADP-L-glycero-beta-D-manno-heptose from D-glycero-beta-D-manno-heptose 7-phosphate: step 3/4. Functionally, catalyzes the phosphorylation of D-glycero-D-manno-heptose 7-phosphate at the C-1 position to selectively form D-glycero-beta-D-manno-heptose-1,7-bisphosphate. In terms of biological role, catalyzes the ADP transfer from ATP to D-glycero-beta-D-manno-heptose 1-phosphate, yielding ADP-D-glycero-beta-D-manno-heptose. The chain is Bifunctional protein HldE from Pseudomonas putida (strain ATCC 47054 / DSM 6125 / CFBP 8728 / NCIMB 11950 / KT2440).